A 537-amino-acid polypeptide reads, in one-letter code: Glucan 1,6-alpha-glucosidase (537 aa).

The active-site Nucleophile is D194. E236 acts as the Proton donor in catalysis.

It belongs to the glycosyl hydrolase 13 family.

It localises to the cytoplasm. It carries out the reaction Hydrolysis of (1-&gt;6)-alpha-D-glucosidic linkages in (1-&gt;6)-alpha-D-glucans and derived oligosaccharides.. Functionally, the physiological substrates may be short isomaltosaccharides. The chain is Glucan 1,6-alpha-glucosidase (dexB) from Streptococcus dysgalactiae subsp. equisimilis (Streptococcus equisimilis).